Reading from the N-terminus, the 184-residue chain is UPF0179 protein Pcal_2106 (184 aa).

Over residues 146 to 161 (GASSAGISQAPSRVPL) the composition is skewed to low complexity. The interval 146 to 184 (GASSAGISQAPSRVPLSKPPSKSPSPQKSSPRGPTSRLP) is disordered.

This sequence belongs to the UPF0179 family.

In Pyrobaculum calidifontis (strain DSM 21063 / JCM 11548 / VA1), this protein is UPF0179 protein Pcal_2106.